Reading from the N-terminus, the 146-residue chain is Hemoglobin subunit beta-1 (146 aa).

Positions 2-146 (HWTAEEKQLI…VAHALARRYH (145 aa)) constitute a Globin domain. The heme b site is built by histidine 63 and histidine 92.

The protein belongs to the globin family. As to quaternary structure, heterotetramer of two alpha chains and two beta chains. Red blood cells.

Its function is as follows. Involved in oxygen transport from the lung to the various peripheral tissues. This is Hemoglobin subunit beta-1 (HBB1) from Iguana iguana (Common iguana).